We begin with the raw amino-acid sequence, 293 residues long: Ribonuclease Z (293 aa).

Zn(2+)-binding residues include histidine 60, histidine 62, aspartate 64, histidine 65, histidine 132, aspartate 200, and histidine 256. Residue aspartate 64 is the Proton acceptor of the active site.

This sequence belongs to the RNase Z family. As to quaternary structure, homodimer. Zn(2+) serves as cofactor.

It catalyses the reaction Endonucleolytic cleavage of RNA, removing extra 3' nucleotides from tRNA precursor, generating 3' termini of tRNAs. A 3'-hydroxy group is left at the tRNA terminus and a 5'-phosphoryl group is left at the trailer molecule.. Zinc phosphodiesterase, which displays some tRNA 3'-processing endonuclease activity. Probably involved in tRNA maturation, by removing a 3'-trailer from precursor tRNA. The protein is Ribonuclease Z of Sulfurisphaera tokodaii (strain DSM 16993 / JCM 10545 / NBRC 100140 / 7) (Sulfolobus tokodaii).